A 230-amino-acid polypeptide reads, in one-letter code: Inactive L-threonine 3-dehydrogenase, mitochondrial (230 aa).

It belongs to the NAD(P)-dependent epimerase/dehydratase family. As to expression, expressed in all tissues examined. Detected in most cell types examined, but not observed in endothelial cells, glioma cell lines and some leukemia cell lines.

Its subcellular location is the mitochondrion. In Homo sapiens (Human), this protein is Inactive L-threonine 3-dehydrogenase, mitochondrial.